Consider the following 143-residue polypeptide: uncharacterized protein (143 aa).

The segment at 1 to 37 (MSAPASSSAIAPSQPTAPGHARHSASWSASASDPSGA) is disordered.

Belongs to the dynein light chain Tctex-type family.

This is an uncharacterized protein from Mycosarcoma maydis (Corn smut fungus).